Reading from the N-terminus, the 593-residue chain is Glutamate decarboxylase 1 (593 aa).

Low complexity predominate over residues 1–12; it reads MASSTPSPATSS. The interval 1-22 is disordered; that stretch reads MASSTPSPATSSNAGADPNTTN. Ser77 carries the phosphoserine modification. 189 to 191 is a 4-aminobutanoate binding site; the sequence is QLS. The residue at position 404 (Lys404) is an N6-(pyridoxal phosphate)lysine. Residue Arg566 coordinates 4-aminobutanoate.

This sequence belongs to the group II decarboxylase family. Homodimer. Pyridoxal 5'-phosphate serves as cofactor. Expressed in brain and pancreatic islets.

It catalyses the reaction L-glutamate + H(+) = 4-aminobutanoate + CO2. In terms of biological role, catalyzes the synthesis of the inhibitory neurotransmitter gamma-aminobutyric acid (GABA) with pyridoxal 5'-phosphate as cofactor. This is Glutamate decarboxylase 1 (Gad1) from Rattus norvegicus (Rat).